The following is a 319-amino-acid chain: Acetyl-coenzyme A carboxylase carboxyl transferase subunit alpha (319 aa).

The CoA carboxyltransferase C-terminal domain occupies 35–296 (NIDEEVHRLR…KAQLLEDLAD (262 aa)).

The protein belongs to the AccA family. As to quaternary structure, acetyl-CoA carboxylase is a heterohexamer composed of biotin carboxyl carrier protein (AccB), biotin carboxylase (AccC) and two subunits each of ACCase subunit alpha (AccA) and ACCase subunit beta (AccD).

Its subcellular location is the cytoplasm. It carries out the reaction N(6)-carboxybiotinyl-L-lysyl-[protein] + acetyl-CoA = N(6)-biotinyl-L-lysyl-[protein] + malonyl-CoA. The protein operates within lipid metabolism; malonyl-CoA biosynthesis; malonyl-CoA from acetyl-CoA: step 1/1. Its function is as follows. Component of the acetyl coenzyme A carboxylase (ACC) complex. First, biotin carboxylase catalyzes the carboxylation of biotin on its carrier protein (BCCP) and then the CO(2) group is transferred by the carboxyltransferase to acetyl-CoA to form malonyl-CoA. This chain is Acetyl-coenzyme A carboxylase carboxyl transferase subunit alpha, found in Salmonella dublin (strain CT_02021853).